The sequence spans 313 residues: Porphobilinogen deaminase (313 aa).

An S-(dipyrrolylmethanemethyl)cysteine modification is found at C241.

The protein belongs to the HMBS family. In terms of assembly, monomer. It depends on dipyrromethane as a cofactor.

It catalyses the reaction 4 porphobilinogen + H2O = hydroxymethylbilane + 4 NH4(+). It functions in the pathway porphyrin-containing compound metabolism; protoporphyrin-IX biosynthesis; coproporphyrinogen-III from 5-aminolevulinate: step 2/4. The protein operates within porphyrin-containing compound metabolism; chlorophyll biosynthesis. Its function is as follows. Tetrapolymerization of the monopyrrole PBG into the hydroxymethylbilane pre-uroporphyrinogen in several discrete steps. The polypeptide is Porphobilinogen deaminase (Chlorobium phaeobacteroides (strain BS1)).